A 100-amino-acid polypeptide reads, in one-letter code: UPF0213 protein YhbQ (100 aa).

Positions 2–77 (TPWFLYLIRT…KQLTKRQKER (76 aa)) constitute a GIY-YIG domain.

The protein belongs to the UPF0213 family.

This is UPF0213 protein YhbQ from Escherichia coli O139:H28 (strain E24377A / ETEC).